Here is a 224-residue protein sequence, read N- to C-terminus: Retinoschisin (224 aa).

The first 23 residues, 1–23 (MPHKIEGFFLLLLFGYEATLGLS), serve as a signal peptide directing secretion. Positions 63–219 (CPYHKPLGFE…IAIRMELLEC (157 aa)) constitute an F5/8 type C domain. Disulfide bonds link C63–C219 and C110–C142.

In terms of assembly, homooctamer of 4 homodimers; disulfide-linked. The homooctamer has a flat, cogwheel structure with a diameter of about 14 nm. Two stacked octamers can assemble to form a hexadecamer. As to expression, detected in the eye cup. Detected in retina, in the inner segment of the photoreceptors, the inner nuclear layer, the inner plexiform layer and the ganglion cell layer (at protein level). Restricted to the retina. At the mRNA level, detected only within the photoreceptor cell layer, most prominently within the inner segments of the photoreceptors. Undetectable in the inner plexiform layers and the inner nuclear layer.

The protein localises to the secreted. Its subcellular location is the cell membrane. Its function is as follows. Binds negatively charged membrane lipids, such as phosphatidylserine and phosphoinositides. May play a role in cell-cell adhesion processes in the retina, via homomeric interaction between octamers present on the surface of two neighboring cells. Required for normal structure and function of the retina. This Mus musculus (Mouse) protein is Retinoschisin (Rs1).